Here is a 302-residue protein sequence, read N- to C-terminus: Elongation factor Ts (302 aa).

The tract at residues 80-83 (TDFV) is involved in Mg(2+) ion dislocation from EF-Tu.

The protein belongs to the EF-Ts family.

The protein localises to the cytoplasm. Functionally, associates with the EF-Tu.GDP complex and induces the exchange of GDP to GTP. It remains bound to the aminoacyl-tRNA.EF-Tu.GTP complex up to the GTP hydrolysis stage on the ribosome. The protein is Elongation factor Ts of Methylibium petroleiphilum (strain ATCC BAA-1232 / LMG 22953 / PM1).